The chain runs to 645 residues: Phosphomethylpyrimidine synthase (645 aa).

Over residues 1–12 the composition is skewed to polar residues; it reads MSHNTVIPTTDI. A disordered region spans residues 1 to 25; the sequence is MSHNTVIPTTDISPKPDPARPRKAQ. Substrate-binding positions include Asn-253, Met-282, Tyr-311, His-347, 367-369, 408-411, and Glu-447; these read SRG and DGLR. Residue His-451 coordinates Zn(2+). Residue Tyr-474 participates in substrate binding. Zn(2+) is bound at residue His-515. Residues Cys-595, Cys-598, and Cys-603 each contribute to the [4Fe-4S] cluster site.

This sequence belongs to the ThiC family. Homodimer. It depends on [4Fe-4S] cluster as a cofactor.

It catalyses the reaction 5-amino-1-(5-phospho-beta-D-ribosyl)imidazole + S-adenosyl-L-methionine = 4-amino-2-methyl-5-(phosphooxymethyl)pyrimidine + CO + 5'-deoxyadenosine + formate + L-methionine + 3 H(+). It functions in the pathway cofactor biosynthesis; thiamine diphosphate biosynthesis. Functionally, catalyzes the synthesis of the hydroxymethylpyrimidine phosphate (HMP-P) moiety of thiamine from aminoimidazole ribotide (AIR) in a radical S-adenosyl-L-methionine (SAM)-dependent reaction. The sequence is that of Phosphomethylpyrimidine synthase from Photorhabdus laumondii subsp. laumondii (strain DSM 15139 / CIP 105565 / TT01) (Photorhabdus luminescens subsp. laumondii).